The following is a 291-amino-acid chain: 2-C-methyl-D-erythritol 4-phosphate cytidylyltransferase (291 aa).

The tract at residues 1–23 (MTERDFDTPVETPTVQPAPAQGT) is disordered.

The protein belongs to the IspD/TarI cytidylyltransferase family. IspD subfamily.

The catalysed reaction is 2-C-methyl-D-erythritol 4-phosphate + CTP + H(+) = 4-CDP-2-C-methyl-D-erythritol + diphosphate. Its pathway is isoprenoid biosynthesis; isopentenyl diphosphate biosynthesis via DXP pathway; isopentenyl diphosphate from 1-deoxy-D-xylulose 5-phosphate: step 2/6. Functionally, catalyzes the formation of 4-diphosphocytidyl-2-C-methyl-D-erythritol from CTP and 2-C-methyl-D-erythritol 4-phosphate (MEP). The chain is 2-C-methyl-D-erythritol 4-phosphate cytidylyltransferase from Bifidobacterium longum subsp. infantis (strain ATCC 15697 / DSM 20088 / JCM 1222 / NCTC 11817 / S12).